The chain runs to 348 residues: Rhodopsin (348 aa).

The Extracellular segment spans residues 1–33 (TEGPYFYVPMVNTTGIVRSPYEYPQYYLVNPAA). Residue N12 is glycosylated (N-linked (GlcNAc...) asparagine). A helical transmembrane segment spans residues 34–58 (FAILGAYMFFLIIVGFPVNFMTLYV). Over 59 to 70 (TLEHKKLRTPLN) the chain is Cytoplasmic. The chain crosses the membrane as a helical span at residues 71-93 (YILLNLAVADLFMVIGGFTTTMY). Topologically, residues 94–107 (TSMHGYFVLGRLGC) are extracellular. A disulfide bond links C107 and C184. Residues 108–130 (NLEGFFATLGGMISLWSLAVLAI) form a helical membrane-spanning segment. A 'Ionic lock' involved in activated form stabilization motif is present at residues 131 to 133 (ERW). The Cytoplasmic portion of the chain corresponds to 131 to 149 (ERWVVVCKPISNFRFGENH). A helical transmembrane segment spans residues 150 to 170 (AIMGVSLTWGMALACTVPPLV). Topologically, residues 171–199 (GWSRYIPEGMQCSCGIDYYTRAEGFNNET) are extracellular. A glycan (N-linked (GlcNAc...) asparagine) is linked at N197. The chain crosses the membrane as a helical span at residues 200–221 (FVLYMFCCHFTVPLTIIFFCYG). Over 222–249 (RLLCAVKEAAAAQQESETTQRAEREVTR) the chain is Cytoplasmic. A helical transmembrane segment spans residues 250–271 (MVVIMVIGFLVCWLPYASVAWF). Residues 272 to 283 (VFTHQGSEFGPL) are Extracellular-facing. Residues 284–305 (FMTIPAFFAKSSAIYNPMIYIC) traverse the membrane as a helical segment. N6-(retinylidene)lysine is present on K293. The Cytoplasmic portion of the chain corresponds to 306–348 (MNKQFRHCMITTLFCGKNPFEGEEEGASSTKTEASSASSVSPA). C320 carries the S-palmitoyl cysteine lipid modification. Residues 327-348 (GEEEGASSTKTEASSASSVSPA) are disordered. Positions 332-348 (ASSTKTEASSASSVSPA) are enriched in low complexity.

It belongs to the G-protein coupled receptor 1 family. Opsin subfamily. Post-translationally, phosphorylated on some or all of the serine and threonine residues present in the C-terminal region. Contains one covalently linked retinal chromophore.

Its subcellular location is the membrane. It localises to the cell projection. It is found in the cilium. The protein resides in the photoreceptor outer segment. Photoreceptor required for image-forming vision at low light intensity. While most salt water fish species use retinal as chromophore, most freshwater fish use 3-dehydroretinal, or a mixture of retinal and 3-dehydroretinal. Light-induced isomerization of 11-cis to all-trans retinal triggers a conformational change that activates signaling via G-proteins. Subsequent receptor phosphorylation mediates displacement of the bound G-protein alpha subunit by arrestin and terminates signaling. In Sargocentron xantherythrum (Hawaiian squirrelfish), this protein is Rhodopsin (rho).